Reading from the N-terminus, the 315-residue chain is Ribosomal RNA small subunit methyltransferase H (315 aa).

S-adenosyl-L-methionine-binding positions include 35 to 37 (GGH), Asp-55, Phe-79, Asp-101, and Gln-108.

This sequence belongs to the methyltransferase superfamily. RsmH family.

Its subcellular location is the cytoplasm. It carries out the reaction cytidine(1402) in 16S rRNA + S-adenosyl-L-methionine = N(4)-methylcytidine(1402) in 16S rRNA + S-adenosyl-L-homocysteine + H(+). In terms of biological role, specifically methylates the N4 position of cytidine in position 1402 (C1402) of 16S rRNA. The protein is Ribosomal RNA small subunit methyltransferase H of Photobacterium profundum (strain SS9).